The chain runs to 213 residues: LexA repressor (213 aa).

Positions 29–49 form a DNA-binding region, H-T-H motif; it reads RAEIAQALGFRSPNAAEDHLK. Active-site for autocatalytic cleavage activity residues include Ser-131 and Lys-168.

Belongs to the peptidase S24 family. Homodimer.

It carries out the reaction Hydrolysis of Ala-|-Gly bond in repressor LexA.. Represses a number of genes involved in the response to DNA damage (SOS response), including recA and lexA. In the presence of single-stranded DNA, RecA interacts with LexA causing an autocatalytic cleavage which disrupts the DNA-binding part of LexA, leading to derepression of the SOS regulon and eventually DNA repair. The sequence is that of LexA repressor from Bordetella avium (strain 197N).